The following is a 409-amino-acid chain: Nucleoprotein (409 aa).

Disordered regions lie at residues 1 to 32 (MASGKATGKTDAPAPVIKLGGPRPPKVGSSGN), 44 to 69 (LNSPQPKFEGSGVPDNENLKTSQQHG), 121 to 194 (ADVK…GSED), and 238 to 259 (VDQVFGPRTKGKEGNFGDDKMN). Positions 29–160 (SSGNASWFQA…GNFRWDFIPL (132 aa)) are RNA-binding. The region spanning 31-156 (GNASWFQAIK…GGPDGNFRWD (126 aa)) is the CoV N NTD domain. The segment covering 162-179 (RGRSGRSTAASSAASSRP) has biased composition (low complexity). Composition is skewed to basic and acidic residues over residues 180 to 192 (PSREGSRGRRSGS) and 247 to 259 (KGKEGNFGDDKMN). A phosphoserine; by host mark is found at S190 and S192. In terms of domain architecture, CoV N CTD spans 215-331 (TKAKADEMAH…QCVDGVGTRP (117 aa)). Positions 226–333 (RYCKRTIPPG…VDGVGTRPKD (108 aa)) are dimerization. A disulfide bridge links C320 with C323. Positions 326-409 (GVGTRPKDDE…GDSALGENEL (84 aa)) are disordered. The segment covering 341–356 (RSSSRPATRTSSPAPR) has biased composition (low complexity). A compositionally biased stretch (basic residues) spans 358-367 (QRLKKEKRPK). The span at 368–384 (KQDDEVDKALTSDEERN) shows a compositional bias: basic and acidic residues. T378 is subject to Phosphothreonine; by host. Residue S379 is modified to Phosphoserine; by host.

Belongs to the gammacoronavirus nucleocapsid protein family. As to quaternary structure, homooligomer. Both monomeric and oligomeric forms interact with RNA. Interacts with protein M. Interacts with NSP3; this interaction serves to tether the genome to the newly translated replicase-transcriptase complex at a very early stage of infection. ADP-ribosylated. The ADP-ribosylation is retained in the virion during infection. Post-translationally, phosphorylated on serine and threonine residues.

The protein resides in the virion. It localises to the host endoplasmic reticulum-Golgi intermediate compartment. Its subcellular location is the host Golgi apparatus. Packages the positive strand viral genome RNA into a helical ribonucleocapsid (RNP) and plays a fundamental role during virion assembly through its interactions with the viral genome and membrane protein M. Plays an important role in enhancing the efficiency of subgenomic viral RNA transcription as well as viral replication. This is Nucleoprotein from Gallus gallus (Chicken).